The following is a 259-amino-acid chain: Ribonuclease HII (259 aa).

The RNase H type-2 domain maps to 72–259 (ERIAGIDEAG…PVREALGVQS (188 aa)). A divalent metal cation contacts are provided by D78, E79, and D170.

The protein belongs to the RNase HII family. It depends on Mn(2+) as a cofactor. Mg(2+) serves as cofactor.

It is found in the cytoplasm. The enzyme catalyses Endonucleolytic cleavage to 5'-phosphomonoester.. Endonuclease that specifically degrades the RNA of RNA-DNA hybrids. The polypeptide is Ribonuclease HII (Geobacillus thermodenitrificans (strain NG80-2)).